Consider the following 113-residue polypeptide: U11-theraphotoxin-Hhn1l (113 aa).

A signal peptide spans 1 to 21; sequence MNTGRVTFLVVFLVAVSLGPA. Residues 22–74 constitute a propeptide that is removed on maturation; that stretch reads DKEENPMEMQEKTQQGKNYLNFGENLVVPKLEELKAKLVEKESKKSKNSRQKR. Disulfide bonds link Cys82/Cys95 and Cys89/Cys110.

It belongs to the neurotoxin 14 (magi-1) family. 01 (HNTX-16) subfamily. As to expression, expressed by the venom gland.

Its subcellular location is the secreted. Its function is as follows. Probable ion channel inhibitor. The chain is U11-theraphotoxin-Hhn1l from Cyriopagopus hainanus (Chinese bird spider).